Here is a 400-residue protein sequence, read N- to C-terminus: Lysophospholipid transporter LplT (400 aa).

12 helical membrane passes run valine 19–alanine 39, valine 53–alanine 73, alanine 91–isoleucine 111, leucine 139–alanine 159, isoleucine 164–isoleucine 184, serine 195–tryptophan 213, leucine 227–leucine 247, tyrosine 257–valine 277, threonine 281–leucine 301, alanine 304–valine 324, asparagine 352–alanine 372, and valine 373–tryptophan 393.

It belongs to the major facilitator superfamily. LplT (TC 2.A.1.42) family.

Its subcellular location is the cell inner membrane. Its function is as follows. Catalyzes the facilitated diffusion of 2-acyl-glycero-3-phosphoethanolamine (2-acyl-GPE) into the cell. The protein is Lysophospholipid transporter LplT of Salmonella enteritidis PT4 (strain P125109).